The primary structure comprises 482 residues: UDP-N-acetylmuramate--L-alanine ligase (482 aa).

129–135 (GTHGKTT) serves as a coordination point for ATP.

This sequence belongs to the MurCDEF family.

It localises to the cytoplasm. It carries out the reaction UDP-N-acetyl-alpha-D-muramate + L-alanine + ATP = UDP-N-acetyl-alpha-D-muramoyl-L-alanine + ADP + phosphate + H(+). It functions in the pathway cell wall biogenesis; peptidoglycan biosynthesis. In terms of biological role, cell wall formation. This Acinetobacter baumannii (strain AB307-0294) protein is UDP-N-acetylmuramate--L-alanine ligase.